We begin with the raw amino-acid sequence, 355 residues long: Peptide chain release factor 1 (355 aa).

Residue glutamine 233 is modified to N5-methylglutamine.

This sequence belongs to the prokaryotic/mitochondrial release factor family. Post-translationally, methylated by PrmC. Methylation increases the termination efficiency of RF1.

Its subcellular location is the cytoplasm. In terms of biological role, peptide chain release factor 1 directs the termination of translation in response to the peptide chain termination codons UAG and UAA. The protein is Peptide chain release factor 1 of Amoebophilus asiaticus (strain 5a2).